The primary structure comprises 406 residues: S-adenosylmethionine synthase (406 aa).

An ATP-binding site is contributed by 140–145 (GRGSVD).

Belongs to the AdoMet synthase 2 family. It depends on Mg(2+) as a cofactor.

The catalysed reaction is L-methionine + ATP + H2O = S-adenosyl-L-methionine + phosphate + diphosphate. It participates in amino-acid biosynthesis; S-adenosyl-L-methionine biosynthesis; S-adenosyl-L-methionine from L-methionine: step 1/1. Catalyzes the formation of S-adenosylmethionine from methionine and ATP. The chain is S-adenosylmethionine synthase (mat) from Aeropyrum pernix (strain ATCC 700893 / DSM 11879 / JCM 9820 / NBRC 100138 / K1).